The following is a 410-amino-acid chain: Serine hydroxymethyltransferase (410 aa).

(6S)-5,6,7,8-tetrahydrofolate contacts are provided by residues Leu-119 and 123-125; that span reads GHL. N6-(pyridoxal phosphate)lysine is present on Lys-228. 351-353 is a binding site for (6S)-5,6,7,8-tetrahydrofolate; it reads SPF.

Belongs to the SHMT family. As to quaternary structure, homodimer. Requires pyridoxal 5'-phosphate as cofactor.

The protein resides in the cytoplasm. It carries out the reaction (6R)-5,10-methylene-5,6,7,8-tetrahydrofolate + glycine + H2O = (6S)-5,6,7,8-tetrahydrofolate + L-serine. The protein operates within one-carbon metabolism; tetrahydrofolate interconversion. It functions in the pathway amino-acid biosynthesis; glycine biosynthesis; glycine from L-serine: step 1/1. Functionally, catalyzes the reversible interconversion of serine and glycine with tetrahydrofolate (THF) serving as the one-carbon carrier. This reaction serves as the major source of one-carbon groups required for the biosynthesis of purines, thymidylate, methionine, and other important biomolecules. Also exhibits THF-independent aldolase activity toward beta-hydroxyamino acids, producing glycine and aldehydes, via a retro-aldol mechanism. This Clostridium perfringens (strain ATCC 13124 / DSM 756 / JCM 1290 / NCIMB 6125 / NCTC 8237 / Type A) protein is Serine hydroxymethyltransferase.